The sequence spans 514 residues: MQQLNPSEISDIIKQRIEKLDVASEARNEGTVVSVSDGIVKIHGLADAMFGEMIEFPGSIFGMVLNLERDSVGAVVLGDYLQLEEGMTAQCTGRILEVPVGPELIGRVVDPLGVPIDGKGELDTKLTDAVEKVAPGVITRQSVDEPIQTGLKSIDAMVPIGRGQRELIIGDRQIGKSAIAIDTIINQKGKGVTCVYVAIGQKQSTIANVVRKLEEHGAMEHTIVVAAGAADPAPMQFLAAYSGCTMGEYFRDRGEDALIVYDDLSKQAVAYRQVSLLLRRPPGREAYPGDVFYLHSRLLERAARVNADHVEKLTNGEVKGKTGSLTALPIIETQGGDVSAFVPTNVISITDGQIFLETNLFNSGVRPAINAGLSVSRVGGSAQTKIIKKLGGSVRLALAQYRELAAFSQFASDLDEATRKQLEHGQRVTELMKQNQYSPLSVAEMAVSLYAANEGFLDDVEVSKVLDFERALHAYMKSEHAELLDKINQSGGYDDEIQQGLKSGLETFKSTQTW.

Position 170–177 (glycine 170–serine 177) interacts with ATP.

Belongs to the ATPase alpha/beta chains family. In terms of assembly, F-type ATPases have 2 components, CF(1) - the catalytic core - and CF(0) - the membrane proton channel. CF(1) has five subunits: alpha(3), beta(3), gamma(1), delta(1), epsilon(1). CF(0) has three main subunits: a(1), b(2) and c(9-12). The alpha and beta chains form an alternating ring which encloses part of the gamma chain. CF(1) is attached to CF(0) by a central stalk formed by the gamma and epsilon chains, while a peripheral stalk is formed by the delta and b chains.

It localises to the cell inner membrane. The catalysed reaction is ATP + H2O + 4 H(+)(in) = ADP + phosphate + 5 H(+)(out). In terms of biological role, produces ATP from ADP in the presence of a proton gradient across the membrane. The alpha chain is a regulatory subunit. The sequence is that of ATP synthase subunit alpha from Chromohalobacter salexigens (strain ATCC BAA-138 / DSM 3043 / CIP 106854 / NCIMB 13768 / 1H11).